Consider the following 266-residue polypeptide: F-box only protein 50 (266 aa).

Residues Met-1–Ala-16 are compositionally biased toward basic and acidic residues. The interval Met-1 to Asn-53 is disordered. The segment covering Pro-27–Pro-41 has biased composition (pro residues). Phosphoserine is present on residues Ser-31, Ser-37, Ser-40, and Ser-43. Residue Thr-46 is modified to Phosphothreonine. Residues Leu-86–Leu-264 form the FBA domain.

As to expression, strongly expressed in kidney. Weakly expressed in stomach, colon, duodenum and prostate.

It is found in the cytoplasm. Its function is as follows. Promotes cell proliferation. This Mus musculus (Mouse) protein is F-box only protein 50 (Nccrp1).